A 313-amino-acid chain; its full sequence is MASSSSPCAACKFLRRKCTQECVFAPYFPPDQPQKFAFVHKVFGASNVAKLLNELASNQREDAVNSLFYEAEARLRDPVYGCVGLISILQHRLKQVNHDLENAKKELATYVGPQAMLPILQPHFMSLPPQPQRPSSSSASVLTQHHHNLLPMMAIPTGQLYHQQQQQIFEAQQLAAVAREQQNEMFRAYGGGGGSSSPHHQNQAQAEILRFNNGFDSVPAGSVTVTGFNQLSSGGTAVTGMSLGGNFVDSPSTNNNYHTDQQLHHHHQPQQHHEAQLFIPSQSSQPLPLQTQETQTQTQPNSESEEGRRNVIG.

The LOB domain maps to 6-107 (SPCAACKFLR…HDLENAKKEL (102 aa)). The tract at residues 245-313 (GNFVDSPSTN…SEEGRRNVIG (69 aa)) is disordered. Positions 249 to 260 (DSPSTNNNYHTD) are enriched in polar residues. Over residues 280-302 (PSQSSQPLPLQTQETQTQTQPNS) the composition is skewed to low complexity.

The protein belongs to the LOB domain-containing protein family. As to expression, expressed in trichomes, at the base of many lateral organs, including branching points of the inflorescence and floral organs and in the distal part of the pistil at stages when style and stigma start to develop. Also detected in pedicels and at the base of petals and sepals.

Controls the proximal-distal patterning in petals and the adaxial-abaxial determination of leaves. Involved in the repression of the homeobox gene BP. The chain is LOB domain-containing protein 36 (LBD36) from Arabidopsis thaliana (Mouse-ear cress).